We begin with the raw amino-acid sequence, 105 residues long: Imizoquin biosynthesis cluster protein I (105 aa).

Residues 1-15 (MSSGEPTTMTPSPSE) are compositionally biased toward polar residues. The segment at 1 to 43 (MSSGEPTTMTPSPSERTPLLSNGSGGAADDGGTTVTISKPNDG) is disordered.

It functions in the pathway secondary metabolite biosynthesis. Its function is as follows. Part of the gene cluster that mediates the biosynthesis of imizoquins A to D, tripeptide-derived alkaloids that serve a protective role against oxidative stress that are essential for normal germination. ImqB is a canonical three-module NRPS that assembles the tripeptide backbone of the imizoquins via condensation of Trp, Tyr, and Leu-derived precursors. N-methylation by imqF and phenol oxidation by imqC, followed by cyclization via the FAD-dependent oxidase imqH carry out the three-step transformation of L-tyrosine into tetrahydroisoquinoline. Importantly, this sequence requires the presence of a free amine in the tyrosine moiety, indicating that isoquinoline formation occurs prior to peptide bond formation. The imidazolidin-4-one ring of imizoquins could form following additional oxidation of the methyl-derived bridgehead carbon by imqH. Lastly, O-methylation by imqG and leucine hydroxylation by imqE complete biosynthesis of the imizoquins. The protein is Imizoquin biosynthesis cluster protein I of Aspergillus flavus (strain ATCC 200026 / FGSC A1120 / IAM 13836 / NRRL 3357 / JCM 12722 / SRRC 167).